The following is a 216-amino-acid chain: MGRNKKKKRDGDDRRPRLILNFDEEKRREYLTGFHKRKVERKKAAIEEIKQRLKQEQKKLREERHQEYLKMLAEREEALEEADELERLVTAKTESVQYDHPNHTVTVTTVSDLDLSGARLLGLPLPEQGDQDGSQEEEVSSMEKPTKALPKKSKDPLLSQRISSLTATLHAHSRKKVKRKHPRRAQDSTKKPPSATRTSKTQRRRRMTGKARHNGE.

The stretch at 33 to 97 (GFHKRKVERK…LVTAKTESVQ (65 aa)) forms a coiled coil. Residues 120–216 (LLGLPLPEQG…MTGKARHNGE (97 aa)) form a disordered region. Residues 129–140 (GDQDGSQEEEVS) are compositionally biased toward acidic residues. Composition is skewed to basic residues over residues 171-183 (AHSRKKVKRKHPR) and 200-216 (KTQRRRRMTGKARHNGE).

It belongs to the RRP17 family. As to quaternary structure, interacts with KIAA1191.

It localises to the nucleus. The protein localises to the nucleolus. The protein resides in the cytoplasm. Functionally, multifunctional RNA binding protein that plays a role in RNA metabolism and DNA maintenance. Participates in the resolution of DNA stress and the maintenance of genome integrity by localizing to sites of DNA insults. Also plays a role in proper nucleolar organization by limiting nucleolar size and regulating nucleolar number. Mechanistically, regulates the nucleolar levels of fibrillarin and nucleolin, two key players in pre-rRNA processing and ribosome assembly. The protein is Nucleolar protein 12 (Nol12) of Rattus norvegicus (Rat).